The primary structure comprises 540 residues: Cytosolic carboxypeptidase 6 (540 aa).

The 272-residue stretch at 167–438 folds into the Peptidase M14 domain; sequence YPYTYTRFQH…NVARTFLDYY (272 aa). H230, E233, and H328 together coordinate Zn(2+). E401 functions as the Proton donor/acceptor in the catalytic mechanism.

It belongs to the peptidase M14 family. Interacts with MYLK. Zn(2+) is required as a cofactor. In terms of tissue distribution, widely expressed. Expressed abundantly in testis, pituitary and brain and to a lower extent in eye, stomach, adrenal and kidney. In brain, expressed at low level in cerebellum as compared to cortex.

Its subcellular location is the cytoplasm. It is found in the cytosol. The protein resides in the cytoskeleton. It localises to the microtubule organizing center. The protein localises to the centrosome. Its subcellular location is the centriole. It is found in the golgi apparatus. The protein resides in the cilium basal body. The enzyme catalyses (L-glutamyl)(n+1)-gamma-L-glutamyl-L-glutamyl-[protein] + H2O = (L-glutamyl)(n)-gamma-L-glutamyl-L-glutamyl-[protein] + L-glutamate. The catalysed reaction is C-terminal L-alpha-aminoacyl-L-glutamyl-L-glutamyl-[tubulin] + H2O = C-terminal L-alpha-aminoacyl-L-glutamyl-[tubulin] + L-glutamate. Its function is as follows. Metallocarboxypeptidase that mediates protein deglutamylation of tubulin and non-tubulin target proteins. Catalyzes the removal of polyglutamate side chains present on the gamma-carboxyl group of glutamate residues within the C-terminal tail of tubulin protein. Specifically cleaves tubulin long-side-chains, while it is not able to remove the branching point glutamate. Also catalyzes the removal of polyglutamate residues from the carboxy-terminus of non-tubulin proteins such as MYLK. Mediates the deglutamylation of nucleotidyltransferase CGAS, leading to CGAS antiviral defense response activation. Involved in KLF4 deglutamylation which promotes KLF4 proteasome-mediated degradation, thereby negatively regulating cell pluripotency maintenance and embryogenesis. This is Cytosolic carboxypeptidase 6 from Mus musculus (Mouse).